Here is an 82-residue protein sequence, read N- to C-terminus: Large ribosomal subunit protein bL31 (82 aa).

The protein belongs to the bacterial ribosomal protein bL31 family. Type A subfamily. Part of the 50S ribosomal subunit.

Its function is as follows. Binds the 23S rRNA. This chain is Large ribosomal subunit protein bL31, found in Rippkaea orientalis (strain PCC 8801 / RF-1) (Cyanothece sp. (strain PCC 8801)).